Reading from the N-terminus, the 160-residue chain is 3-hydroxyacyl-[acyl-carrier-protein] dehydratase FabZ (160 aa).

His-63 is an active-site residue.

This sequence belongs to the thioester dehydratase family. FabZ subfamily.

The protein localises to the cytoplasm. It carries out the reaction a (3R)-hydroxyacyl-[ACP] = a (2E)-enoyl-[ACP] + H2O. In terms of biological role, involved in unsaturated fatty acids biosynthesis. Catalyzes the dehydration of short chain beta-hydroxyacyl-ACPs and long chain saturated and unsaturated beta-hydroxyacyl-ACPs. This chain is 3-hydroxyacyl-[acyl-carrier-protein] dehydratase FabZ, found in Xylella fastidiosa (strain M23).